The primary structure comprises 233 residues: 7-cyano-7-deazaguanine synthase (233 aa).

ATP is bound at residue 7-17; sequence LSGGLDSAVTS. Cys-195, Cys-206, Cys-209, and Cys-212 together coordinate Zn(2+).

The protein belongs to the QueC family. The cofactor is Zn(2+).

The catalysed reaction is 7-carboxy-7-deazaguanine + NH4(+) + ATP = 7-cyano-7-deazaguanine + ADP + phosphate + H2O + H(+). It functions in the pathway purine metabolism; 7-cyano-7-deazaguanine biosynthesis. Catalyzes the ATP-dependent conversion of 7-carboxy-7-deazaguanine (CDG) to 7-cyano-7-deazaguanine (preQ(0)). This Methanococcus maripaludis (strain C6 / ATCC BAA-1332) protein is 7-cyano-7-deazaguanine synthase.